The following is a 330-amino-acid chain: Succinoglycan biosynthesis protein ExoA (330 aa).

A run of 3 helical transmembrane segments spans residues 116-136 (ALATGADSVVVAMQTVGFSTF), 260-280 (IAFGALLAIVNWMAVVPVGVW), and 299-319 (YGPLAAVAAMVMHLAWSAGFW).

This sequence belongs to the glycosyltransferase 2 family.

It is found in the cell membrane. Its pathway is glycan metabolism; exopolysaccharide biosynthesis. Glycosyltransferase required for the synthesis of succinoglycan (EPS I). Needed for the addition of the second sugar (glucose). Catalyzes the formation of a beta-1,3 linkage with the galactose lipid carrier. The chain is Succinoglycan biosynthesis protein ExoA (exoA) from Rhizobium meliloti (strain 1021) (Ensifer meliloti).